A 440-amino-acid polypeptide reads, in one-letter code: ATP-dependent protease ATPase subunit HslU (440 aa).

Residues I18, 60 to 65 (GVGKTE), D252, E318, and R390 each bind ATP.

This sequence belongs to the ClpX chaperone family. HslU subfamily. In terms of assembly, a double ring-shaped homohexamer of HslV is capped on each side by a ring-shaped HslU homohexamer. The assembly of the HslU/HslV complex is dependent on binding of ATP.

The protein resides in the cytoplasm. ATPase subunit of a proteasome-like degradation complex; this subunit has chaperone activity. The binding of ATP and its subsequent hydrolysis by HslU are essential for unfolding of protein substrates subsequently hydrolyzed by HslV. HslU recognizes the N-terminal part of its protein substrates and unfolds these before they are guided to HslV for hydrolysis. The chain is ATP-dependent protease ATPase subunit HslU from Acidithiobacillus ferrooxidans (strain ATCC 23270 / DSM 14882 / CIP 104768 / NCIMB 8455) (Ferrobacillus ferrooxidans (strain ATCC 23270)).